Here is a 166-residue protein sequence, read N- to C-terminus: MSRAEAAVVKVGIADVQVARYPDKIRTSGLGSCVGLVLYDKDKQTAGLVHVMLPDSGLSKTAELNRAKYADTAVKMTIDMLLKAGCRKFALKAKLAGGAEMFKFKMTNDLMKIGPRNVAAIKEQLSLYNIPVISEDTGGSSGRTIEFEPKSCMLHIRTVKQGETTI.

It belongs to the CheD family. As to quaternary structure, forms a complex with CheC.

The enzyme catalyses L-glutaminyl-[protein] + H2O = L-glutamyl-[protein] + NH4(+). Functionally, deamidates glutamine residues to glutamate on methyl-accepting chemotaxis receptors (MCPs). CheD-mediated MCP deamidation is required for productive communication of the conformational signals of the chemoreceptors to the CheA kinase. The chain is Chemoreceptor glutamine deamidase CheD from Bacillus velezensis (strain DSM 23117 / BGSC 10A6 / LMG 26770 / FZB42) (Bacillus amyloliquefaciens subsp. plantarum).